The sequence spans 133 residues: uncharacterized protein (133 aa).

The 104-residue stretch at 3–106 (IFTKIINREL…PTRSLSDFGF (104 aa)) folds into the HIT domain. The short motif at 90 to 94 (HLHIH) is the Histidine triad motif element.

This is an uncharacterized protein from Mycobacterium tuberculosis (strain ATCC 25618 / H37Rv).